A 272-amino-acid chain; its full sequence is Ribosomal RNA small subunit methyltransferase A (272 aa).

Positions 18, 20, 45, 66, 91, and 113 each coordinate S-adenosyl-L-methionine.

It belongs to the class I-like SAM-binding methyltransferase superfamily. rRNA adenine N(6)-methyltransferase family. RsmA subfamily.

The protein resides in the cytoplasm. The catalysed reaction is adenosine(1518)/adenosine(1519) in 16S rRNA + 4 S-adenosyl-L-methionine = N(6)-dimethyladenosine(1518)/N(6)-dimethyladenosine(1519) in 16S rRNA + 4 S-adenosyl-L-homocysteine + 4 H(+). Its function is as follows. Specifically dimethylates two adjacent adenosines (A1518 and A1519) in the loop of a conserved hairpin near the 3'-end of 16S rRNA in the 30S particle. May play a critical role in biogenesis of 30S subunits. In Yersinia pestis bv. Antiqua (strain Antiqua), this protein is Ribosomal RNA small subunit methyltransferase A.